The following is a 496-amino-acid chain: Aminoacetaldehyde dehydrogenase (496 aa).

NADH-binding residues include L166, W168, K192, S246, T249, and Y256. Catalysis depends on E268, which acts as the Proton acceptor. C269 is an NADH binding site. The active-site Nucleophile is C303. Residues K353 and E398 each coordinate NADH.

The protein belongs to the aldehyde dehydrogenase family. As to quaternary structure, homotetramer, formed by two symmetrical dimers.

It catalyses the reaction aminoacetaldehyde + NAD(+) + H2O = glycine + NADH + 2 H(+). The catalysed reaction is 3-aminopropanal + NAD(+) + H2O = beta-alanine + NADH + 2 H(+). Functionally, NAD(+)-dependent aminoaldehyde dehydrogenase highly efficient with protonated aminoacetaldehyde (ACTAL) and 3-aminopropanaldehyde (APAL). Likely participates in a still uncharacterized metabolic pathway present in proteobacteria species, in which ACTAL might be an intermediate, yielding glycine. Highly prefers NAD(+) over NADP(+). Shows very poor activity with acetaldehyde, propanaldehyde, butanaldehyde, pentanaldehyde, dimethylaminoacetaldehyde, trimethylaminoacetaldehyde (betaine aldehyde), trimethylaminobutanaldehyde, short aliphatic hydroxyaldehydes such as 3-hydroxypropanaldehyde and 2-hydroxypropanaldehyde (lactaldehyde), and aromatic aldehydes. This is Aminoacetaldehyde dehydrogenase from Pseudomonas aeruginosa (strain ATCC 15692 / DSM 22644 / CIP 104116 / JCM 14847 / LMG 12228 / 1C / PRS 101 / PAO1).